The sequence spans 246 residues: Protein PHLOEM PROTEIN 2-LIKE A1 (246 aa).

Vascular tissues, specifically in phloem companion cell-sieve element complexes.

The polypeptide is Protein PHLOEM PROTEIN 2-LIKE A1 (PP2A1) (Arabidopsis thaliana (Mouse-ear cress)).